Here is a 233-residue protein sequence, read N- to C-terminus: Protein DOUBLE-STRAND BREAK FORMATION (233 aa).

In terms of assembly, interacts with PRD1; this interaction facilitates a binding to PRD3. Specifically expressed in buds.

In terms of biological role, required for meiotic double-strand break (DSB) formation, the initial event for meiotic recombination. The polypeptide is Protein DOUBLE-STRAND BREAK FORMATION (Arabidopsis thaliana (Mouse-ear cress)).